The sequence spans 166 residues: Glycine cleavage system H protein 3, mitochondrial (166 aa).

The transit peptide at 1–35 (MALRMWASSTANALKLSSSASKSHLLPAFSISRCF) directs the protein to the mitochondrion. The Lipoyl-binding domain occupies 57-139 (VATIGITDHA…YEDGWMIKVK (83 aa)). Lys-98 is subject to N6-lipoyllysine. Residue Ser-141 is modified to Phosphoserine.

The protein belongs to the GcvH family. In terms of assembly, the glycine cleavage system is composed of four proteins: P, T, L and H. (R)-lipoate is required as a cofactor. S-nitrosylated and/or glutathionylated at unknown positions in response to nitric oxide.

The protein localises to the mitochondrion. Its activity is regulated as follows. Inhibited by harpin, S-nitrosoglutathione (GSNO), nitric oxide, N-ethylmaleimide and 5,5'-dithiobis-(2-nitrobenzoic acid). Functionally, the glycine decarboxylase (GDC) or glycine cleavage system catalyzes the degradation of glycine. The H protein shuttles the methylamine group of glycine from the P protein to the T protein. The protein is Glycine cleavage system H protein 3, mitochondrial (GDH3) of Arabidopsis thaliana (Mouse-ear cress).